Here is a 180-residue protein sequence, read N- to C-terminus: Large ribosomal subunit protein uL6 (180 aa).

This sequence belongs to the universal ribosomal protein uL6 family. As to quaternary structure, part of the 50S ribosomal subunit.

Functionally, this protein binds to the 23S rRNA, and is important in its secondary structure. It is located near the subunit interface in the base of the L7/L12 stalk, and near the tRNA binding site of the peptidyltransferase center. This chain is Large ribosomal subunit protein uL6, found in Thermus aquaticus.